Here is a 310-residue protein sequence, read N- to C-terminus: Protein translocase subunit SecF (310 aa).

6 consecutive transmembrane segments (helical) span residues 18-38 (FFTI…YRGG), 135-155 (QAVY…AFRF), 162-182 (IVSV…VILA), 188-208 (ITIV…TIVL), 240-260 (IVTS…GGEV), and 267-287 (IMII…APLI).

It belongs to the SecD/SecF family. SecF subfamily. As to quaternary structure, forms a complex with SecD. Part of the essential Sec protein translocation apparatus which comprises SecA, SecYEG and auxiliary proteins SecDF. Other proteins may also be involved.

It localises to the cell inner membrane. Functionally, part of the Sec protein translocase complex. Interacts with the SecYEG preprotein conducting channel. SecDF uses the proton motive force (PMF) to complete protein translocation after the ATP-dependent function of SecA. The chain is Protein translocase subunit SecF from Endomicrobium trichonymphae.